A 542-amino-acid chain; its full sequence is Chaperonin GroEL (542 aa).

ATP contacts are provided by residues 29–32, 86–90, Gly413, 476–478, and Asp492; these read TLGP, DGTTT, and NAA.

Belongs to the chaperonin (HSP60) family. As to quaternary structure, forms a cylinder of 14 subunits composed of two heptameric rings stacked back-to-back. Interacts with the co-chaperonin GroES.

Its subcellular location is the cytoplasm. It carries out the reaction ATP + H2O + a folded polypeptide = ADP + phosphate + an unfolded polypeptide.. Together with its co-chaperonin GroES, plays an essential role in assisting protein folding. The GroEL-GroES system forms a nano-cage that allows encapsulation of the non-native substrate proteins and provides a physical environment optimized to promote and accelerate protein folding. The sequence is that of Chaperonin GroEL from Lactococcus lactis subsp. cremoris (strain MG1363).